Consider the following 643-residue polypeptide: E3 ubiquitin-protein ligase Praja-1 (643 aa).

The interval 1–363 (MGQESSKPVW…SDDYYKYCDE (363 aa)) is disordered. Composition is skewed to basic and acidic residues over residues 95-105 (DYSRYPPREYR), 145-158 (KFKDDKLYDPEKGA), and 173-183 (RDVREERDKLD). Residues 200-209 (QSSVASQSSS) are compositionally biased toward low complexity. The span at 213–227 (LATKGDSSERERREQ) shows a compositional bias: basic and acidic residues. Ser265 carries the post-translational modification Phosphoserine. Phosphothreonine is present on Thr277. 2 stretches are compositionally biased toward basic and acidic residues: residues 289 to 310 (RWRDTANDNEGHSDGLARRGRG) and 320 to 362 (KYPE…KYCD). 2 positions are modified to phosphoserine: Ser365 and Ser367. A disordered region spans residues 380-454 (RSREQTLSSS…REPSLQEEQA (75 aa)). Low complexity predominate over residues 410–439 (SASTGTSPGPGASASAGAGAGASAGSNGSN). The RING-type zinc-finger motif lies at 595–636 (CPICCSEYVKGEVATELPCHHYFHKPCVSIWLQKSGTCPVCR).

Binds ubiquitin-conjugating enzymes (E2s). In vitro, interacts with the ubiquitin-conjugating enzyme, UBE2D2. Substrate for E2-dependent ubiquitination. In terms of tissue distribution, expressed in various regions of the brain including the cerebellum, cerebral cortex, medulla, occipital pole, frontal lobe, temporal lobe and putamen. Highest levels in the cerebral cortex.

The catalysed reaction is S-ubiquitinyl-[E2 ubiquitin-conjugating enzyme]-L-cysteine + [acceptor protein]-L-lysine = [E2 ubiquitin-conjugating enzyme]-L-cysteine + N(6)-ubiquitinyl-[acceptor protein]-L-lysine.. In terms of biological role, has E2-dependent E3 ubiquitin-protein ligase activity. Ubiquitinates MAGED1 antigen leading to its subsequent degradation by proteasome. May be involved in protein sorting. In Homo sapiens (Human), this protein is E3 ubiquitin-protein ligase Praja-1 (PJA1).